The following is a 255-amino-acid chain: CDP-diacylglycerol pyrophosphatase (255 aa).

Residues 5–27 traverse the membrane as a helical segment; sequence LLITVALIAVLALTTLVAWRYLF.

The protein belongs to the Cdh family.

The protein localises to the cell inner membrane. The catalysed reaction is a CDP-1,2-diacyl-sn-glycerol + H2O = a 1,2-diacyl-sn-glycero-3-phosphate + CMP + 2 H(+). It participates in phospholipid metabolism; CDP-diacylglycerol degradation; phosphatidate from CDP-diacylglycerol: step 1/1. The polypeptide is CDP-diacylglycerol pyrophosphatase (Cronobacter sakazakii (strain ATCC BAA-894) (Enterobacter sakazakii)).